The primary structure comprises 535 residues: Cytochrome c oxidase subunit 1 (535 aa).

A helical transmembrane segment spans residues 21-43 (VLYFIFALFSAMIGTGLSAIIRL). Glu-44 and Gly-49 together coordinate Ca(2+). The next 6 membrane-spanning stretches (helical) occupy residues 63 to 85 (VITAHAILMIFFFVMPALVGGFG), 106 to 128 (ISFWLLVPSLILILTSALVEAGA), 153 to 175 (IFSLHLSGFSSLLGAINFITTFI), 188 to 210 (PLFAWAVLFTAILLLLSLPVLAA), 242 to 264 (YWWNHPEVYILIIPGFGIISHAV), and 271 to 293 (PVFGVQGMIYAMWSIGLLGFCVW). A Fe(II)-heme a-binding site is contributed by His-67. Cu cation is bound at residue His-246. A cross-link (1'-histidyl-3'-tyrosine (His-Tyr)) is located at residues 246 to 250 (HPEVY). Tyr-250 is an O2 binding site. Cu cation-binding residues include His-295 and His-296. Helical transmembrane passes span 308 to 330 (AYFTSATMVIAVPTSIKIFSWLA) and 342 to 364 (TALFALGFIFLFTIGGLTGVVLA). His-373 and Asp-374 together coordinate Mg(2+). The next 3 helical transmembrane spans lie at 379 to 401 (VAHFHYVLSMGAVFSIFCGWYLW), 414 to 436 (LSHIHFWLMFIGVNVTFFPMHFL), and 456 to 478 (NQVASLGSIISIVASIVFIYVVY). His-381 is a heme a3 binding site. Fe(II)-heme a is bound at residue His-383.

It belongs to the heme-copper respiratory oxidase family. In terms of assembly, component of the cytochrome c oxidase (complex IV, CIV), a multisubunit enzyme composed of a catalytic core of 3 subunits and several supernumerary subunits. The complex exists as a monomer or a dimer and forms supercomplexes (SCs) in the inner mitochondrial membrane with ubiquinol-cytochrome c oxidoreductase (cytochrome b-c1 complex, complex III, CIII). Requires heme as cofactor. Cu cation is required as a cofactor.

It localises to the mitochondrion inner membrane. It carries out the reaction 4 Fe(II)-[cytochrome c] + O2 + 8 H(+)(in) = 4 Fe(III)-[cytochrome c] + 2 H2O + 4 H(+)(out). The protein operates within energy metabolism; oxidative phosphorylation. Its function is as follows. Component of the cytochrome c oxidase, the last enzyme in the mitochondrial electron transport chain which drives oxidative phosphorylation. The respiratory chain contains 3 multisubunit complexes succinate dehydrogenase (complex II, CII), ubiquinol-cytochrome c oxidoreductase (cytochrome b-c1 complex, complex III, CIII) and cytochrome c oxidase (complex IV, CIV), that cooperate to transfer electrons derived from NADH and succinate to molecular oxygen, creating an electrochemical gradient over the inner membrane that drives transmembrane transport and the ATP synthase. Cytochrome c oxidase is the component of the respiratory chain that catalyzes the reduction of oxygen to water. Electrons originating from reduced cytochrome c in the intermembrane space (IMS) are transferred via the dinuclear copper A center (CU(A)) of subunit 2 and heme A of subunit 1 to the active site in subunit 1, a binuclear center (BNC) formed by heme A3 and copper B (CU(B)). The BNC reduces molecular oxygen to 2 water molecules using 4 electrons from cytochrome c in the IMS and 4 protons from the mitochondrial matrix. The protein is Cytochrome c oxidase subunit 1 (COX1) of Yarrowia lipolytica (strain CLIB 122 / E 150) (Yeast).